A 343-amino-acid chain; its full sequence is 4-hydroxy-2-oxovalerate aldolase 1 (343 aa).

The Pyruvate carboxyltransferase domain occupies V8 to T260. R16 to D17 is a substrate binding site. Residue D17 participates in Mn(2+) binding. H20 acts as the Proton acceptor in catalysis. S170 and H199 together coordinate substrate. Residues H199 and H201 each contribute to the Mn(2+) site. Y290 is a substrate binding site.

This sequence belongs to the 4-hydroxy-2-oxovalerate aldolase family.

It catalyses the reaction (S)-4-hydroxy-2-oxopentanoate = acetaldehyde + pyruvate. The chain is 4-hydroxy-2-oxovalerate aldolase 1 from Dechloromonas aromatica (strain RCB).